The sequence spans 416 residues: Adenylosuccinate synthetase (416 aa).

Residues 13–19 (GDEGKGK) and 41–43 (GHT) contribute to the GTP site. Aspartate 14 functions as the Proton acceptor in the catalytic mechanism. Residues aspartate 14 and glycine 41 each coordinate Mg(2+). Residues 14-17 (DEGK), 39-42 (NAGH), threonine 126, arginine 140, glutamine 220, threonine 235, and arginine 299 each bind IMP. Histidine 42 serves as the catalytic Proton donor. Residue 295-301 (TTTGRRR) participates in substrate binding. GTP is bound by residues arginine 301, 327 to 329 (KLD), and 405 to 407 (STS).

This sequence belongs to the adenylosuccinate synthetase family. Homodimer. The cofactor is Mg(2+).

The protein resides in the cytoplasm. The catalysed reaction is IMP + L-aspartate + GTP = N(6)-(1,2-dicarboxyethyl)-AMP + GDP + phosphate + 2 H(+). It functions in the pathway purine metabolism; AMP biosynthesis via de novo pathway; AMP from IMP: step 1/2. Functionally, plays an important role in the de novo pathway of purine nucleotide biosynthesis. Catalyzes the first committed step in the biosynthesis of AMP from IMP. The chain is Adenylosuccinate synthetase from Campylobacter curvus (strain 525.92).